Here is a 441-residue protein sequence, read N- to C-terminus: Xaa-Pro aminopeptidase (441 aa).

Mn(2+)-binding residues include Asp261, Asp272, His355, Glu384, and Glu407.

This sequence belongs to the peptidase M24B family. In terms of assembly, homotetramer. Requires Mn(2+) as cofactor.

The protein resides in the cytoplasm. It catalyses the reaction Release of any N-terminal amino acid, including proline, that is linked to proline, even from a dipeptide or tripeptide.. In Escherichia coli (strain K12), this protein is Xaa-Pro aminopeptidase (pepP).